The chain runs to 532 residues: MRTLEAFALSLFLVFLVKWVNSDSSSSPSKDQFLSCMSTHSDSSFINPKSFIHKPDSRVYTDFSQSLISQNYRFLTLNFTSQKPILIVTPRTDTEIQRSLLCSRKLGVKVRTKSGGHDYEGLSYLSLHSPFIILDLVNVRSIEINLADETAWVGAGATIGELYYKIAKSSKIHGFPAGTCPSVGVGGHFSGGGFGAMMRKHGLAADNVVDARFVDANGRIYNSRREMGEDLFWAIRGGGAASFGVVLSWKVKLVRVPEKVTCFRRNLPLTQNMTKIVHRWQQIAAELDDNLFIRVIVSISGGSVQTTFQANYLGGIDKLIPLMNQKFPELGLTFQDCSEMTWIDSIMYFNWKKGQPLETLLDRGQRYNDLYFKAKSDFVKNPIPEIGLEGIWTRFHEVESPIMIMEPLGGKMYEIGETETPFPHRRGNLYNIQYMVKWRLKDIGVMEKHVTWMRLLYRYMRVYVSASPRGAYLNYRDLDLGMNRGVNTSFEDAKLWGFRYFGSNFKRLAIVKGKIDPTNFFRNEQSVPPLIV.

The first 22 residues, 1–22 (MRTLEAFALSLFLVFLVKWVNS), serve as a signal peptide directing secretion. Cys-36 and Cys-102 form a disulfide bridge. N-linked (GlcNAc...) asparagine glycosylation is present at Asn-78. One can recognise an FAD-binding PCMH-type domain in the interval 80-256 (TSQKPILIVT…LSWKVKLVRV (177 aa)). A cross-link (6-(S-cysteinyl)-8alpha-(pros-histidyl)-FAD (His-Cys)) is located at residues 117-180 (HDYEGLSYLS…KIHGFPAGTC (64 aa)). Residues Asn-272 and Asn-487 are each glycosylated (N-linked (GlcNAc...) asparagine).

It belongs to the oxygen-dependent FAD-linked oxidoreductase family. The cofactor is FAD. Post-translationally, the FAD cofactor is bound via a bicovalent 6-S-cysteinyl, 8alpha-N1-histidyl FAD linkage. In terms of tissue distribution, accumulates in cell walls of etiolated hypocotyls.

It is found in the secreted. It localises to the cell wall. The polypeptide is Berberine bridge enzyme-like 23 (Arabidopsis thaliana (Mouse-ear cress)).